A 361-amino-acid polypeptide reads, in one-letter code: Transcription factor MafA (361 aa).

Residue S14 is modified to Phosphoserine. A Glycyl lysine isopeptide (Lys-Gly) (interchain with G-Cter in SUMO2) cross-link involves residue K32. Disordered regions lie at residues 40–105 (RFCH…VGGA) and 175–228 (GGAD…AGHH). The segment covering 46–76 (PPGSLSSTPLSTPCSSVPSSPSFCAPSPGTG) has biased composition (low complexity). Residue S49 is modified to Phosphoserine. Phosphothreonine occurs at positions 53 and 57. A phosphoserine mark is found at S61 and S65. Residues 183 to 211 (GHHHGAHHTAHHHHSAHHHHHHHHHHGGS) show a composition bias toward basic residues. Residues 212-226 (GHHGGGAGHGGGGAG) are compositionally biased toward gly residues. The segment at 262 to 287 (RLKQKRRTLKNRGYAQSCRFKRVQQR) is basic motif. In terms of domain architecture, bZIP spans 262–325 (RLKQKRRTLK…DLYKEKYEKL (64 aa)). The segment at 290-311 (LESEKCQLQSQVEQLKLEVGRL) is leucine-zipper. The segment at 324–361 (KLAGRGGPGGAGGAGFPREPSPAQAGPGAAKGAPDFFL) is disordered. Positions 327-338 (GRGGPGGAGGAG) are enriched in gly residues. The span at 345-361 (PAQAGPGAAKGAPDFFL) shows a compositional bias: low complexity.

The protein belongs to the bZIP family. As to quaternary structure, forms homodimers. Monomers and dimers are able to bind DNA, but the off-rate is faster for monomers. Interacts with NEUROD1 and PDX1. May interact with MAFB, FOS, JUN and PCAF. Post-translationally, ubiquitinated, leading to its degradation by the proteasome. Phosphorylated at tyrosines.

It localises to the nucleus. Transcription factor that activates insulin gene expression. Acts synergistically with NEUROD1/BETA2 and PDX1. Binds the insulin enhancer C1/RIPE3b element. Binds to consensus TRE-type MARE 5'-TGCTGACTCAGCA-3' DNA sequence. This is Transcription factor MafA (Mafa) from Rattus norvegicus (Rat).